A 577-amino-acid chain; its full sequence is Dihydroxy-acid dehydratase (577 aa).

The segment covering 1-10 (MLKRSFDKSK) has biased composition (basic and acidic residues). The tract at residues 1 to 22 (MLKRSFDKSKLPSRHVTEGPSR) is disordered. Cysteine 56 lines the [2Fe-2S] cluster pocket. Aspartate 88 serves as a coordination point for Mg(2+). Cysteine 129 provides a ligand contact to [2Fe-2S] cluster. Aspartate 130 and lysine 131 together coordinate Mg(2+). Position 131 is an N6-carboxylysine (lysine 131). [2Fe-2S] cluster is bound at residue cysteine 201. Mg(2+) is bound at residue glutamate 453. Serine 479 (proton acceptor) is an active-site residue.

It belongs to the IlvD/Edd family. In terms of assembly, homodimer. Requires [2Fe-2S] cluster as cofactor. It depends on Mg(2+) as a cofactor.

The catalysed reaction is (2R)-2,3-dihydroxy-3-methylbutanoate = 3-methyl-2-oxobutanoate + H2O. The enzyme catalyses (2R,3R)-2,3-dihydroxy-3-methylpentanoate = (S)-3-methyl-2-oxopentanoate + H2O. It functions in the pathway amino-acid biosynthesis; L-isoleucine biosynthesis; L-isoleucine from 2-oxobutanoate: step 3/4. It participates in amino-acid biosynthesis; L-valine biosynthesis; L-valine from pyruvate: step 3/4. In terms of biological role, functions in the biosynthesis of branched-chain amino acids. Catalyzes the dehydration of (2R,3R)-2,3-dihydroxy-3-methylpentanoate (2,3-dihydroxy-3-methylvalerate) into 2-oxo-3-methylpentanoate (2-oxo-3-methylvalerate) and of (2R)-2,3-dihydroxy-3-methylbutanoate (2,3-dihydroxyisovalerate) into 2-oxo-3-methylbutanoate (2-oxoisovalerate), the penultimate precursor to L-isoleucine and L-valine, respectively. This chain is Dihydroxy-acid dehydratase, found in Dinoroseobacter shibae (strain DSM 16493 / NCIMB 14021 / DFL 12).